The chain runs to 466 residues: Tissue alpha-L-fucosidase (466 aa).

The first 31 residues, 1–31, serve as a signal peptide directing secretion; it reads MRAPGMRSRPAGPALLLLLLFLGAAESVRRA. Phosphothreonine is present on T170. N241, N268, and N382 each carry an N-linked (GlcNAc...) asparagine glycan.

The protein belongs to the glycosyl hydrolase 29 family. As to quaternary structure, homotetramer.

Its subcellular location is the lysosome. The catalysed reaction is an alpha-L-fucoside + H2O = L-fucose + an alcohol. It carries out the reaction a neolactoside IV(2)-alpha-Fuc-nLc4Cer(d18:1(4E)) + H2O = a neolactoside nLc4Cer(d18:1(4E)) + L-fucose. The enzyme catalyses a neolactoside IV(2)-alpha-Fuc-nLc4Cer(d18:0) + H2O = a neolactoside nLc4Cer(d18:0) + L-fucose. In terms of biological role, alpha-L-fucosidase is responsible for hydrolyzing the alpha-1,6-linked fucose joined to the reducing-end N-acetylglucosamine of the carbohydrate moieties of glycoproteins. The chain is Tissue alpha-L-fucosidase from Homo sapiens (Human).